The primary structure comprises 93 residues: Small integral membrane protein 41 (93 aa).

A helical transmembrane segment spans residues 38 to 58 (VVLGVLSLLVLCGVLFLGGGL). Basic and acidic residues predominate over residues 71-80 (REQRASREPE). Residues 71–93 (REQRASREPEPGSASGEDGDDDS) are disordered.

The protein resides in the membrane. The chain is Small integral membrane protein 41 from Homo sapiens (Human).